We begin with the raw amino-acid sequence, 467 residues long: Cytochrome c-552 (467 aa).

The signal sequence occupies residues 1 to 27; that stretch reads MMKKMTGKSFALSALVAASFMAAGAMA. Residue His87 participates in heme c binding. Residues Cys115, Cys118, and Lys119 each coordinate heme. Heme c-binding residues include Cys153, Cys156, His157, Cys195, Cys198, and His199. Residues Glu201, Tyr202, Lys250, and Gln252 each coordinate Ca(2+). Position 202 (Tyr202) interacts with substrate. His253 provides a ligand contact to substrate. Heme c contacts are provided by His264, Cys271, Cys274, His275, His290, Cys303, Cys306, His307, and His382.

This sequence belongs to the cytochrome c-552 family. It depends on Ca(2+) as a cofactor. The cofactor is heme c.

It is found in the periplasm. The enzyme catalyses 6 Fe(III)-[cytochrome c] + NH4(+) + 2 H2O = 6 Fe(II)-[cytochrome c] + nitrite + 8 H(+). It participates in nitrogen metabolism; nitrate reduction (assimilation). Its function is as follows. Catalyzes the reduction of nitrite to ammonia, consuming six electrons in the process. The polypeptide is Cytochrome c-552 (Shewanella sp. (strain W3-18-1)).